The chain runs to 261 residues: Acetylglutamate kinase (261 aa).

Substrate-binding positions include 41-42 (GG), arginine 63, and asparagine 157.

Belongs to the acetylglutamate kinase family. ArgB subfamily.

It localises to the cytoplasm. It carries out the reaction N-acetyl-L-glutamate + ATP = N-acetyl-L-glutamyl 5-phosphate + ADP. It participates in amino-acid biosynthesis; L-arginine biosynthesis; N(2)-acetyl-L-ornithine from L-glutamate: step 2/4. Catalyzes the ATP-dependent phosphorylation of N-acetyl-L-glutamate. In Koribacter versatilis (strain Ellin345), this protein is Acetylglutamate kinase.